The chain runs to 649 residues: Protein phosphatase Slingshot homolog 3 (649 aa).

The span at M1–G20 shows a compositional bias: polar residues. A disordered region spans residues M1 to R32. A2 carries the N-acetylalanine modification. 2 positions are modified to phosphoserine: S9 and S38. The interval L49–W90 is disordered. Residues A61 to D78 are compositionally biased toward acidic residues. Position 88 is a phosphoserine (S88). The region spanning E266–A321 is the DEK-C domain. The 142-residue stretch at R325–A466 folds into the Tyrosine-protein phosphatase domain. Catalysis depends on C410, which acts as the Phosphocysteine intermediate. 2 stretches are compositionally biased toward low complexity: residues L541–E551 and T608–S627. Disordered stretches follow at residues L541–W586 and T608–A649. The span at S639–A649 shows a compositional bias: basic and acidic residues.

It belongs to the protein-tyrosine phosphatase family. As to quaternary structure, does not bind to, or colocalize with, filamentous actin. Expressed in brain, small intestine and testis. Also expressed at lower levels in heart, kidney, liver, spleen and thymus.

The protein localises to the cytoplasm. It is found in the cytoskeleton. It localises to the nucleus. It carries out the reaction O-phospho-L-tyrosyl-[protein] + H2O = L-tyrosyl-[protein] + phosphate. The catalysed reaction is O-phospho-L-seryl-[protein] + H2O = L-seryl-[protein] + phosphate. The enzyme catalyses O-phospho-L-threonyl-[protein] + H2O = L-threonyl-[protein] + phosphate. Protein phosphatase which may play a role in the regulation of actin filament dynamics. Can dephosphorylate and activate the actin binding/depolymerizing factor cofilin, which subsequently binds to actin filaments and stimulates their disassembly. The chain is Protein phosphatase Slingshot homolog 3 (Ssh3) from Mus musculus (Mouse).